Here is a 161-residue protein sequence, read N- to C-terminus: Low molecular weight phosphotyrosine protein phosphatase (161 aa).

Residue Cys14 is the Nucleophile of the active site. Catalysis depends on Arg20, which acts as the Transition state stabilizer. Ser57 carries the phosphoserine modification. The Proton donor role is filled by Asp133.

This sequence belongs to the low molecular weight phosphotyrosine protein phosphatase family.

It is found in the cytoplasm. The enzyme catalyses O-phospho-L-tyrosyl-[protein] + H2O = L-tyrosyl-[protein] + phosphate. It carries out the reaction a phosphate monoester + H2O = an alcohol + phosphate. Functionally, acts on tyrosine phosphorylated proteins, low-MW aryl phosphates and natural and synthetic acyl phosphates. This chain is Low molecular weight phosphotyrosine protein phosphatase, found in Saccharomyces cerevisiae (strain ATCC 204508 / S288c) (Baker's yeast).